Reading from the N-terminus, the 334-residue chain is L-lactate dehydrogenase C chain (334 aa).

NAD(+)-binding positions include 30–58 (GQVGMACAVSVLLKELADELALVDILEDK), R100, and N139. Positions 139 and 170 each coordinate substrate. H194 (proton acceptor) is an active-site residue. T249 contacts substrate.

The protein belongs to the LDH/MDH superfamily. LDH family. As to quaternary structure, homotetramer.

It localises to the cytoplasm. It carries out the reaction (S)-lactate + NAD(+) = pyruvate + NADH + H(+). It participates in fermentation; pyruvate fermentation to lactate; (S)-lactate from pyruvate: step 1/1. The chain is L-lactate dehydrogenase C chain (ldhc) from Xenopus laevis (African clawed frog).